The chain runs to 430 residues: Serine--tRNA ligase (430 aa).

237-239 (TAE) serves as a coordination point for L-serine. Residue 268–270 (RSE) coordinates ATP. Glu-291 contributes to the L-serine binding site. 355-358 (EISS) contacts ATP. L-serine is bound at residue Ser-391.

The protein belongs to the class-II aminoacyl-tRNA synthetase family. Type-1 seryl-tRNA synthetase subfamily. In terms of assembly, homodimer. The tRNA molecule binds across the dimer.

It is found in the cytoplasm. The catalysed reaction is tRNA(Ser) + L-serine + ATP = L-seryl-tRNA(Ser) + AMP + diphosphate + H(+). It carries out the reaction tRNA(Sec) + L-serine + ATP = L-seryl-tRNA(Sec) + AMP + diphosphate + H(+). The protein operates within aminoacyl-tRNA biosynthesis; selenocysteinyl-tRNA(Sec) biosynthesis; L-seryl-tRNA(Sec) from L-serine and tRNA(Sec): step 1/1. In terms of biological role, catalyzes the attachment of serine to tRNA(Ser). Is also able to aminoacylate tRNA(Sec) with serine, to form the misacylated tRNA L-seryl-tRNA(Sec), which will be further converted into selenocysteinyl-tRNA(Sec). The polypeptide is Serine--tRNA ligase (Enterobacter sp. (strain 638)).